We begin with the raw amino-acid sequence, 635 residues long: PTS system fructose-specific EIIABC component (635 aa).

The PTS EIIA type-2 domain occupies 5–149 (ELLTKHTIKL…DAIIDIINQH (145 aa)). The active-site Tele-phosphohistidine intermediate; for EIIA activity is the histidine 67. Histidine 67 is modified (phosphohistidine; by HPr). The disordered stretch occupies residues 149–168 (HDKDDDEEEEEEEAAPAPAG). Residues 152–162 (DDDEEEEEEEA) show a composition bias toward acidic residues. A PTS EIIB type-2 domain is found at 172 to 267 (ILAVTACPTG…PQELIEKAMN (96 aa)). Catalysis depends on cysteine 178, which acts as the Phosphocysteine intermediate; for EIIB activity. Cysteine 178 bears the Phosphocysteine; by EIIA mark. A disordered region spans residues 273–293 (YQGSGGGSAASNDDEEAKGKS). The region spanning 301–635 (FYKHLMSGVS…GIVKKPVTEK (335 aa)) is the PTS EIIC type-2 domain. Helical transmembrane passes span 312–332 (MLPF…WGIH), 350–370 (FIGG…FIAM), 392–412 (NAGF…VILL), 428–448 (PVLI…QFVV), 470–490 (NLVL…GGPL), 511–531 (AAIM…TTIF), 544–564 (ITCY…FAAA), 569–589 (VIPA…FFRV), and 608–628 (MLYL…LGIV).

The protein resides in the cell membrane. The enzyme catalyses D-fructose(out) + N(pros)-phospho-L-histidyl-[protein] = D-fructose 1-phosphate(in) + L-histidyl-[protein]. In terms of biological role, the phosphoenolpyruvate-dependent sugar phosphotransferase system (sugar PTS), a major carbohydrate active transport system, catalyzes the phosphorylation of incoming sugar substrates concomitantly with their translocation across the cell membrane. This system is involved in fructose transport. The protein is PTS system fructose-specific EIIABC component (fruA) of Bacillus subtilis (strain 168).